A 366-amino-acid chain; its full sequence is GTPase Obg (366 aa).

Residues M1–I159 form the Obg domain. The 168-residue stretch at A160–V327 folds into the OBG-type G domain. GTP is bound by residues G166 to S173, F191 to H195, D212 to G215, S279 to D282, and S308 to I310. The Mg(2+) site is built by S173 and T193. The segment at D333 to E366 is disordered. The segment covering K347–G357 has biased composition (basic and acidic residues).

Belongs to the TRAFAC class OBG-HflX-like GTPase superfamily. OBG GTPase family. In terms of assembly, monomer. It depends on Mg(2+) as a cofactor.

The protein resides in the cytoplasm. Functionally, an essential GTPase which binds GTP, GDP and possibly (p)ppGpp with moderate affinity, with high nucleotide exchange rates and a fairly low GTP hydrolysis rate. Plays a role in control of the cell cycle, stress response, ribosome biogenesis and in those bacteria that undergo differentiation, in morphogenesis control. The chain is GTPase Obg from Allorhizobium ampelinum (strain ATCC BAA-846 / DSM 112012 / S4) (Agrobacterium vitis (strain S4)).